The sequence spans 123 residues: Holo-[acyl-carrier-protein] synthase (123 aa).

Residues aspartate 8 and glutamate 60 each contribute to the Mg(2+) site.

It belongs to the P-Pant transferase superfamily. AcpS family. The cofactor is Mg(2+).

The protein localises to the cytoplasm. It carries out the reaction apo-[ACP] + CoA = holo-[ACP] + adenosine 3',5'-bisphosphate + H(+). In terms of biological role, transfers the 4'-phosphopantetheine moiety from coenzyme A to a Ser of acyl-carrier-protein. The chain is Holo-[acyl-carrier-protein] synthase from Ehrlichia chaffeensis (strain ATCC CRL-10679 / Arkansas).